The sequence spans 445 residues: Glucose-6-phosphate isomerase (445 aa).

Glu-284 acts as the Proton donor in catalysis. Residues His-305 and Lys-419 contribute to the active site.

It belongs to the GPI family.

The protein resides in the cytoplasm. The enzyme catalyses alpha-D-glucose 6-phosphate = beta-D-fructose 6-phosphate. It functions in the pathway carbohydrate biosynthesis; gluconeogenesis. It participates in carbohydrate degradation; glycolysis; D-glyceraldehyde 3-phosphate and glycerone phosphate from D-glucose: step 2/4. Functionally, catalyzes the reversible isomerization of glucose-6-phosphate to fructose-6-phosphate. In Leptospira interrogans serogroup Icterohaemorrhagiae serovar Lai (strain 56601), this protein is Glucose-6-phosphate isomerase.